We begin with the raw amino-acid sequence, 474 residues long: Cyclin-dependent kinase 18 (474 aa).

A phosphoserine mark is found at Ser14, Ser74, Ser89, Ser98, Ser117, and Ser132. The disordered stretch occupies residues 44–93; the sequence is NLQLGPLGRDPPQECSTFSPTDSGEEPGQLSPGVQFQRRQNQRRFSMEDV. Residues 144 to 425 enclose the Protein kinase domain; sequence YVKLDKLGEG…AEAALSHSYF (282 aa). Residues 150 to 158 and Lys173 each bind ATP; that span reads LGEGTYATV. The active-site Proton acceptor is Asp265. Phosphoserine is present on residues Ser440 and Ser443.

It belongs to the protein kinase superfamily. CMGC Ser/Thr protein kinase family. CDC2/CDKX subfamily. As to expression, isoform 2 expression is limited to several subcortical nuclei of the basal gangli and the spinal cord. Isoform 1 is widely expressed.

The enzyme catalyses L-seryl-[protein] + ATP = O-phospho-L-seryl-[protein] + ADP + H(+). It catalyses the reaction L-threonyl-[protein] + ATP = O-phospho-L-threonyl-[protein] + ADP + H(+). Functionally, may play a role in signal transduction cascades in terminally differentiated cells. In Homo sapiens (Human), this protein is Cyclin-dependent kinase 18 (CDK18).